The following is a 150-amino-acid chain: Transcriptional repressor NrdR (150 aa).

A zinc finger lies at 3–33 (CPFCGGESRVLESRPASDEEAVRRRRECLAC). Residues 48–138 (LIVVKKDGRR…VYREFKDLNE (91 aa)) form the ATP-cone domain.

It belongs to the NrdR family. The cofactor is Zn(2+).

In terms of biological role, negatively regulates transcription of bacterial ribonucleotide reductase nrd genes and operons by binding to NrdR-boxes. This is Transcriptional repressor NrdR from Symbiobacterium thermophilum (strain DSM 24528 / JCM 14929 / IAM 14863 / T).